Consider the following 129-residue polypeptide: Ropporin-1 (129 aa).

One can recognise an RIIa domain in the interval 11–34 (PELPELLKTQPPDLIQWAAEYFGA).

The protein belongs to the ropporin family. Homodimer. Interacts with AKAP3. May interact with SPA17. Interacts with RHPN1. Interacts with FSCB; the interaction increases upon spermatozoa capacitation conditions. Interacts with CFAP61. Sumoylated, sumoylation decreases upon spermatozoa capacitation conditions.

Its subcellular location is the cell projection. It localises to the cilium. It is found in the flagellum. Its function is as follows. Important for male fertility. With ROPN1L, involved in fibrous sheath integrity and sperm motility, plays a role in PKA-dependent signaling processes required for spermatozoa capacitation. This chain is Ropporin-1, found in Mesocricetus auratus (Golden hamster).